The primary structure comprises 334 residues: G-protein coupled receptor 12 (334 aa).

The Extracellular portion of the chain corresponds to 1–48 (MNEDLKVNLSGLPRDYLDAAAAENISAAVSSRVPAVEPEPELVVNPWD). 2 N-linked (GlcNAc...) asparagine glycosylation sites follow: Asn8 and Asn24. A helical transmembrane segment spans residues 49 to 69 (IVLCTSGTLISCENAIVVLII). At 70–77 (FHNPSLRA) the chain is on the cytoplasmic side. A helical membrane pass occupies residues 78 to 98 (PMFLLIGSLALADLLAGIGLI). Topologically, residues 99–113 (TNFVFAYLLQSEATK) are extracellular. A helical transmembrane segment spans residues 114–134 (LVTIGLIVASFSASVCSLLAI). Over 135-158 (TVDRYLSLYYALTYHSERTVTFTY) the chain is Cytoplasmic. Residues 159 to 179 (VMLVMLWGTSICLGLLPVMGW) traverse the membrane as a helical segment. The Extracellular segment spans residues 180 to 199 (NCLRDESTCSVVRPLTKNNA). The helical transmembrane segment at 200–220 (AILSVSFLFMFALMLQLYIQI) threads the bilayer. Residues 221–252 (CKIVMRHAHQIALQHHFLATSHYVTTRKGVST) lie on the Cytoplasmic side of the membrane. A helical membrane pass occupies residues 253-273 (LAIILGTFAACWMPFTLYSLI). Residues 274-282 (ADYTYPSIY) lie on the Extracellular side of the membrane. The chain crosses the membrane as a helical span at residues 283–303 (TYATLLPATYNSIINPVIYAF). The Cytoplasmic portion of the chain corresponds to 304–334 (RNQEIQKALCLICCGCIPSSLAQRARSPSDV). Residue Cys317 is the site of S-palmitoyl cysteine attachment. Ser330 and Ser332 each carry phosphoserine.

The protein belongs to the G-protein coupled receptor 1 family.

It localises to the cell membrane. Functionally, promotes neurite outgrowth and blocks myelin inhibition in neurons. Receptor with constitutive G(s) signaling activity that stimulates cyclic AMP production. The chain is G-protein coupled receptor 12 (GPR12) from Homo sapiens (Human).